Consider the following 987-residue polypeptide: SNF2 domain-containing protein ENL1 (987 aa).

Disordered regions lie at residues 1–172 (MASP…AYGG) and 224–245 (FGDY…ENHA). 2 stretches are compositionally biased toward pro residues: residues 18 to 27 (TPPAPTPLAA) and 51 to 71 (NPNP…PQEP). A compositionally biased stretch (basic and acidic residues) spans 99–110 (DSIRDILDDLTT). The span at 141–156 (PSQSQLNDGTKPSSSF) shows a compositional bias: polar residues. Residues 226–237 (DYDDEDDIDQDA) show a composition bias toward acidic residues. The Helicase ATP-binding domain maps to 292–466 (WVLHCRGTGG…WALFYFCCPE (175 aa)). 305–312 (DDMGLGKT) provides a ligand contact to ATP. Residues 417–420 (DEGH) carry the DEAH box motif. The Helicase C-terminal domain occupies 645–801 (SLLQNLVSEG…TRYFSKRDIQ (157 aa)).

It belongs to the SNF2/RAD54 helicase family. Expressed in ovaries, roots, shoots and leaves.

The protein localises to the cytoplasm. The protein resides in the chromosome. Functionally, DNA helicase that acts as an essential component of the spindle assembly checkpoint. Plays an indispensable role in the development of seed endosperm. Is required to secure sister chromosome separation during endosperm syncytial mitosis, which involves extremely rapid free nuclear cycles. The protein is SNF2 domain-containing protein ENL1 of Oryza sativa subsp. japonica (Rice).